A 387-amino-acid polypeptide reads, in one-letter code: Protein RecA (387 aa).

80-87 is an ATP binding site; the sequence is GPESSGKT. Positions 348–387 are disordered; sequence LDDSEVAETEEETTASKTKAKAKKEEKAVETEEIELELED. Composition is skewed to acidic residues over residues 349–360 and 378–387; these read DDSEVAETEEET and TEEIELELED.

Belongs to the RecA family.

Its subcellular location is the cytoplasm. In terms of biological role, can catalyze the hydrolysis of ATP in the presence of single-stranded DNA, the ATP-dependent uptake of single-stranded DNA by duplex DNA, and the ATP-dependent hybridization of homologous single-stranded DNAs. It interacts with LexA causing its activation and leading to its autocatalytic cleavage. This Lactococcus lactis subsp. cremoris (strain MG1363) protein is Protein RecA.